A 34-amino-acid chain; its full sequence is Calcitonin-like peptide 2 (34 aa).

Cysteines 2 and 7 form a disulfide. Phenylalanine amide is present on F34.

In Odorrana schmackeri (Schmacker's frog), this protein is Calcitonin-like peptide 2.